The sequence spans 576 residues: RING finger and SPRY domain-containing protein 1 (576 aa).

Residues 1-16 form the signal peptide; that stretch reads MIVFGWAVFLASRSLG. Serine 50 carries the post-translational modification Phosphoserine. Residues 50–99 form a disordered region; that stretch reads SGTDDSVDTQQQQAENSAVPTADTRSQPRDPVRPPRRGRGPHEPRRKKQN. Positions 57–68 are enriched in polar residues; sequence DTQQQQAENSAV. Residues 83 to 97 are compositionally biased toward basic residues; the sequence is PPRRGRGPHEPRRKK. The 184-residue stretch at 300–483 folds into the B30.2/SPRY domain; it reads LFLKEGRQLT…CEFNFGAKPF (184 aa). Asparagine 314 is a glycosylation site (N-linked (GlcNAc...) asparagine). The RING-type zinc finger occupies 527–562; it reads CSLCCDEVADTQLKPCGHSDLCMDCALQLETCPLCR.

The protein localises to the secreted. The protein is RING finger and SPRY domain-containing protein 1 (RSPRY1) of Homo sapiens (Human).